The chain runs to 95 residues: Pyrimidine/purine nucleoside phosphorylase (95 aa).

The protein belongs to the nucleoside phosphorylase PpnP family.

The enzyme catalyses a purine D-ribonucleoside + phosphate = a purine nucleobase + alpha-D-ribose 1-phosphate. It catalyses the reaction adenosine + phosphate = alpha-D-ribose 1-phosphate + adenine. It carries out the reaction cytidine + phosphate = cytosine + alpha-D-ribose 1-phosphate. The catalysed reaction is guanosine + phosphate = alpha-D-ribose 1-phosphate + guanine. The enzyme catalyses inosine + phosphate = alpha-D-ribose 1-phosphate + hypoxanthine. It catalyses the reaction thymidine + phosphate = 2-deoxy-alpha-D-ribose 1-phosphate + thymine. It carries out the reaction uridine + phosphate = alpha-D-ribose 1-phosphate + uracil. The catalysed reaction is xanthosine + phosphate = alpha-D-ribose 1-phosphate + xanthine. Functionally, catalyzes the phosphorolysis of diverse nucleosides, yielding D-ribose 1-phosphate and the respective free bases. Can use uridine, adenosine, guanosine, cytidine, thymidine, inosine and xanthosine as substrates. Also catalyzes the reverse reactions. The polypeptide is Pyrimidine/purine nucleoside phosphorylase (Yersinia enterocolitica serotype O:8 / biotype 1B (strain NCTC 13174 / 8081)).